The primary structure comprises 2944 residues: Collagen alpha-1(VII) chain (2944 aa).

The first 16 residues, 1-16 (MTLRLLVAALCAGILA), serve as a signal peptide directing secretion. The interval 17–1253 (EAPRVRAQHR…PEPCPVYCPK (1237 aa)) is nonhelical region (NC1). In terms of domain architecture, VWFA 1 spans 38–211 (DIVFLLDGSS…SILRTLLPLV (174 aa)). 9 Fibronectin type-III domains span residues 234–329 (APRD…TALE), 330–416 (GPEL…TDAS), 417–507 (VEQT…PELP), 510–597 (PVTD…EPET), 600–687 (AVPG…DPLG), 688–775 (PVRT…APEP), 778–866 (RVSR…PPEA), 869–957 (ALGT…SPRV), and 958–1051 (PSIE…CPRG). An N-linked (GlcNAc...) asparagine glycan is attached at Asn337. The segment at 632–651 (STGSGPESSQTLPPDSTATD) is disordered. The N-linked (GlcNAc...) asparagine glycan is linked to Asn786. Residues 1054–1229 (DVVFLPHATQ…PSLDQAVSGL (176 aa)) form the VWFA 2 domain. The N-linked (GlcNAc...) asparagine glycan is linked to Asn1109. 2 short sequence motifs (cell attachment site) span residues 1170 to 1172 (RGD) and 1334 to 1336 (RGD). Disordered stretches follow at residues 1239-1941 (TTQP…SVPN), 1963-2782 (WDES…EKGE), and 2837-2872 (SHAE…PWDS). The segment at 1254–1477 (GQKGEPGEMG…GPRGPPGAIG (224 aa)) is interrupted collagenous region. A triple-helical region region spans residues 1254-2784 (GQKGEPGEMG…GPRGEKGEAA (1531 aa)). Basic and acidic residues predominate over residues 1336-1346 (DPGERGPRGPK). The segment covering 1355-1365 (VIGGEGPGLPG) has biased composition (gly residues). A compositionally biased stretch (basic and acidic residues) spans 1399 to 1408 (KGDKGDRGER). Residues 1429 to 1440 (PGSPGPQGPVGP) show a composition bias toward pro residues. Residues 1574 to 1583 (RGPPGLVLPG) show a composition bias toward low complexity. Basic and acidic residues-rich tracts occupy residues 1630-1642 (RGRD…KGDE), 1669-1683 (VGEK…EDGR), and 1715-1733 (AREK…RGPK). The segment covering 1786–1802 (KPGAAGPSGPNGAAGKA) has biased composition (low complexity). Positions 1852–1877 (EDGRKGEKGDSGASGREGRDGPKGER) are enriched in basic and acidic residues. Residues 1886 to 1897 (QGPPGLPGPVGP) show a composition bias toward pro residues. The segment covering 1898–1911 (PGQGFPGVPGGTGP) has biased composition (gly residues). The segment covering 1974–1984 (PERRRGPKGDS) has biased composition (basic and acidic residues). Residues 2008-2010 (RGD) carry the Cell attachment site motif. 4-hydroxyproline is present on residues Pro2036 and Pro2039. The span at 2046–2055 (GRAGGVGEAG) shows a compositional bias: gly residues. A compositionally biased stretch (basic and acidic residues) spans 2056–2074 (RPGERGERGEKGERGEQGR). Over residues 2078–2092 (PGLPGTPGPPGPPGP) the composition is skewed to pro residues. 4-hydroxyproline occurs at positions 2084, 2087, and 2090. Residues 2127–2143 (PKGDRGVPGIKGDRGEP) are compositionally biased toward basic and acidic residues. 4 positions are modified to 4-hydroxyproline: Pro2167, Pro2176, Pro2185, and Pro2188. Composition is skewed to low complexity over residues 2191-2206 (PGLA…SGLK) and 2235-2250 (SGLV…PGQV). Over residues 2328-2346 (AKGDRGLPGPRGEKGEAGR) the composition is skewed to basic and acidic residues. A compositionally biased stretch (low complexity) spans 2387 to 2406 (VKGDLGLPGLPGAPGVVGFP). Residues 2438 to 2448 (PLGPPGPPGSV) show a composition bias toward pro residues. 2 stretches are compositionally biased toward basic and acidic residues: residues 2471–2486 (RGER…DGRP) and 2534–2570 (AKGD…EPGD). The Cell attachment site motif lies at 2553-2555 (RGD). Positions 2573–2601 (SAGLPGLRGLLGPQGQPGAAGIPGDPGSP) are enriched in low complexity. Lys2625 and Lys2631 each carry 5-hydroxylysine; alternate. O-linked (Gal...) hydroxylysine; alternate glycosylation is found at Lys2625 and Lys2631. 3 positions are modified to 4-hydroxyproline: Pro2664, Pro2667, and Pro2673. Residues 2704–2713 (GTPGIGGFPG) show a composition bias toward gly residues. The segment covering 2749-2762 (GERVVGAPGVPGAP) has biased composition (low complexity). A nonhelical region (NC2) region spans residues 2785 to 2944 (LTEDDIRGFV…QSQGTGTAQD (160 aa)). Over residues 2837–2847 (SHAEEEERVPP) the composition is skewed to basic and acidic residues. Over residues 2848-2872 (EDDEYSEYSEYSVEEYQDPEAPWDS) the composition is skewed to acidic residues. In terms of domain architecture, BPTI/Kunitz inhibitor spans 2872 to 2944 (SDDPCSLPLD…QSQGTGTAQD (73 aa)). Intrachain disulfides connect Cys2876/Cys2929, Cys2885/Cys2912, and Cys2904/Cys2925.

Homotrimer. Interacts with MIA3/TANGO1; facilitating its loading into transport carriers and subsequent secretion. Prolines at the third position of the tripeptide repeating unit (G-X-Y) are hydroxylated in some or all of the chains.

It localises to the secreted. It is found in the extracellular space. The protein localises to the extracellular matrix. Its subcellular location is the basement membrane. Functionally, stratified squamous epithelial basement membrane protein that forms anchoring fibrils which may contribute to epithelial basement membrane organization and adherence by interacting with extracellular matrix (ECM) proteins such as type IV collagen. This chain is Collagen alpha-1(VII) chain (COL7A1), found in Homo sapiens (Human).